The chain runs to 365 residues: Terpene cyclase DEP1 (365 aa).

The next 8 membrane-spanning stretches (helical) occupy residues 10–30 (LYLS…NGMF), 82–102 (LLFF…LIES), 116–136 (AWAM…IYLY), 158–178 (LPII…PAWF), 188–208 (ALIA…VGIT), 233–253 (LILA…GALF), 297–317 (LFSQ…AQLL), and 338–358 (MIYL…SFAL).

This sequence belongs to the membrane-bound ascI terpene cyclase family.

The protein localises to the membrane. The protein operates within polyketide biosynthesis. In terms of biological role, part of the gene cluster that mediates the biosynthesis of depudecin, a highly oxidized eleven-carbon linear polyketide that acts as a histone deacetylase (HDAC) inhibitor and makes a small contribution to pathogenesis. The reducing polyketide synthase DEP5 is the central enzyme in depudecin biosynthesis by yielding the backbone polyketide chain. The monooxygenases DEP2 and DEP4, as well as the uncharacterized protein DEP1, then act as tailoring enzymes to modify the intermediate polyketide chain into depudecin. The sequence is that of Terpene cyclase DEP1 from Fusarium langsethiae.